A 206-amino-acid polypeptide reads, in one-letter code: Small ribosomal subunit protein uS4 (206 aa).

The 61-residue stretch at 96-156 (TRLDNVVYRM…EKSRTQARIK (61 aa)) folds into the S4 RNA-binding domain.

This sequence belongs to the universal ribosomal protein uS4 family. As to quaternary structure, part of the 30S ribosomal subunit. Contacts protein S5. The interaction surface between S4 and S5 is involved in control of translational fidelity.

One of the primary rRNA binding proteins, it binds directly to 16S rRNA where it nucleates assembly of the body of the 30S subunit. In terms of biological role, with S5 and S12 plays an important role in translational accuracy. This is Small ribosomal subunit protein uS4 from Shewanella putrefaciens (strain CN-32 / ATCC BAA-453).